We begin with the raw amino-acid sequence, 398 residues long: Methionine aminopeptidase 1A (398 aa).

Ala-2 is modified (N-acetylalanine). A C6H2-type zinc finger spans residues 12-65; the sequence is TLSCARCEKPAHLQCPKCIDLKLPREQASFCTQECFKAAWSSHKSVHVKAQLSS. The Zn(2+) site is built by Cys-15, Cys-18, Cys-26, Cys-29, Cys-42, Cys-46, His-54, and His-58. His-214 provides a ligand contact to a protein. Zn(2+) is bound by residues Asp-231, Asp-242, and His-305. A protein is bound at residue His-312. Zn(2+) contacts are provided by Glu-338 and Glu-369.

The protein belongs to the peptidase M24A family. Methionine aminopeptidase type 1 subfamily. Associates with the 60S ribosomal subunit of the 80S translational complex. It depends on Zn(2+) as a cofactor. The cofactor is Co(2+). Mn(2+) serves as cofactor. Requires Fe(2+) as cofactor. Ubiquitous.

The protein resides in the cytoplasm. It carries out the reaction Release of N-terminal amino acids, preferentially methionine, from peptides and arylamides.. Functionally, cotranslationally removes the N-terminal methionine from nascent proteins. The N-terminal methionine is often cleaved when the second residue in the primary sequence is small and uncharged (Met-Ala-, Cys, Gly, Pro, Ser, Thr, or Val). The polypeptide is Methionine aminopeptidase 1A (MAP1A) (Arabidopsis thaliana (Mouse-ear cress)).